Here is a 129-residue protein sequence, read N- to C-terminus: uncharacterized protein (129 aa).

Helical transmembrane passes span 49–69 (LWSL…IVGV), 72–92 (FTIF…NLIF), and 101–118 (YFNC…NLLQ).

It localises to the membrane. This is an uncharacterized protein from Saccharomyces cerevisiae (strain ATCC 204508 / S288c) (Baker's yeast).